Reading from the N-terminus, the 430-residue chain is Nacrein-like protein P2 (430 aa).

Residue Asn-27 is glycosylated (N-linked (GlcNAc...) asparagine). The Alpha-carbonic anhydrase domain occupies 33–429 (AGFSYDRSIC…KNKVTVYKSF (397 aa)). 3 residues coordinate Zn(2+): His-132, His-134, and His-157. Residues 201–312 (DEPDDEECKR…GENGHKHGCR (112 aa)) are disordered. The span at 207–219 (ECKRILKGHHPDN) shows a compositional bias: basic and acidic residues. Residues 220–304 (NENGNGDNGN…NNGENGNNGE (85 aa)) show a composition bias toward low complexity. 27 tandem repeats follow at residues 225–227 (GDN), 228–230 (GNN), 231–233 (GYN), 234–236 (GDN), 237–239 (GNN), 240–242 (GDN), 243–245 (GNN), 246–248 (GYN), 249–251 (GDN), 252–254 (GNN), 255–257 (GVN), 258–260 (GNN), 261–263 (GYN), 264–266 (GDN), 267–269 (GNN), 270–272 (GDN), 273–275 (GNN), 276–278 (GYN), 279–281 (GDN), 282–284 (GNN), 285–287 (GDN), 288–290 (GNN), 291–293 (GEN), 294–296 (GNN), 297–299 (GEN), 300–301 (GN), and 303–305 (GEN). The segment at 225–305 (GDNGNNGYNG…NGENGNNGEN (81 aa)) is 27 X 3 AA approximate tandem repeats of G-X-N. Residue 370 to 371 (TT) coordinates substrate.

It belongs to the alpha-carbonic anhydrase family. As to quaternary structure, homooligomer; disulfide-linked. May also be disulfide-linked to insoluble organic matrix. The cofactor is Zn(2+). Expressed in the mantle.

The protein localises to the secreted. It is found in the extracellular space. The protein resides in the extracellular matrix. The catalysed reaction is hydrogencarbonate + H(+) = CO2 + H2O. In terms of biological role, acts as a negative regulator for calcification in the shells of mollusks. May function both as a calcium concentrator and as a carbonic anhydrase required for production of carbonate ions, which are assembled to CaCO(3) at mineralization sites. Is important for shell formation in both the calcitic prismatic layer and the aragonitic nacreous layer. Shows inhibitory activity of crystal formation when present in free state but, when attached to the insoluble matrix, may regulate the form and size of aragonite crystal. This Mizuhopecten yessoensis (Japanese scallop) protein is Nacrein-like protein P2.